The chain runs to 205 residues: 3-demethoxyubiquinol 3-hydroxylase (205 aa).

Positions 54, 84, 87, 136, 168, and 171 each coordinate Fe cation.

The protein belongs to the COQ7 family. Requires Fe cation as cofactor.

It is found in the cell membrane. The enzyme catalyses a 5-methoxy-2-methyl-3-(all-trans-polyprenyl)benzene-1,4-diol + AH2 + O2 = a 3-demethylubiquinol + A + H2O. The protein operates within cofactor biosynthesis; ubiquinone biosynthesis. In terms of biological role, catalyzes the hydroxylation of 2-nonaprenyl-3-methyl-6-methoxy-1,4-benzoquinol during ubiquinone biosynthesis. The protein is 3-demethoxyubiquinol 3-hydroxylase of Delftia acidovorans (strain DSM 14801 / SPH-1).